Reading from the N-terminus, the 178-residue chain is Protein 105R (178 aa).

An N-terminal signal peptide occupies residues 1 to 18 (MYFLFFFLLFLFPVGVKG).

This Pantherophis guttatus (Corn snake) protein is Protein 105R.